Reading from the N-terminus, the 175-residue chain is Inorganic pyrophosphatase 1 (175 aa).

Positions 30, 44, and 56 each coordinate substrate. Mg(2+) is bound by residues D66, D71, and D103. Y142 is a binding site for substrate.

Belongs to the PPase family. In terms of assembly, homohexamer. It depends on Mg(2+) as a cofactor.

It localises to the cytoplasm. It catalyses the reaction diphosphate + H2O = 2 phosphate + H(+). Catalyzes the hydrolysis of inorganic pyrophosphate (PPi) forming two phosphate ions. This chain is Inorganic pyrophosphatase 1, found in Pseudomonas syringae pv. tomato (strain ATCC BAA-871 / DC3000).